A 611-amino-acid polypeptide reads, in one-letter code: Protein PES4 (611 aa).

A disordered region spans residues 37 to 81 (FNPVVTPIRPDDYHEKTSRSSSSSHSDSPEFLRINNNKSGHKNGK). Basic and acidic residues predominate over residues 45 to 54 (RPDDYHEKTS). 4 RRM domains span residues 91-169 (VPLF…PSLR), 179-247 (TNVF…GKKI), 303-379 (NSIF…RAQD), and 393-471 (STLF…WERQ).

The protein localises to the nucleus. The chain is Protein PES4 (PES4) from Saccharomyces cerevisiae (strain ATCC 204508 / S288c) (Baker's yeast).